Reading from the N-terminus, the 287-residue chain is ATP synthase subunit a (287 aa).

Helical transmembrane passes span 37–57 (LDSV…MWLA), 96–116 (FIAP…AMDL), 144–164 (DLST…VYSI), 187–207 (PVFA…EYVA), 224–244 (ELVF…LSGV), and 266–286 (TLQA…AHEA).

Belongs to the ATPase A chain family. In terms of assembly, F-type ATPases have 2 components, CF(1) - the catalytic core - and CF(0) - the membrane proton channel. CF(1) has five subunits: alpha(3), beta(3), gamma(1), delta(1), epsilon(1). CF(0) has three main subunits: a(1), b(2) and c(9-12). The alpha and beta chains form an alternating ring which encloses part of the gamma chain. CF(1) is attached to CF(0) by a central stalk formed by the gamma and epsilon chains, while a peripheral stalk is formed by the delta and b chains.

The protein resides in the cell inner membrane. In terms of biological role, key component of the proton channel; it plays a direct role in the translocation of protons across the membrane. The sequence is that of ATP synthase subunit a from Acidovorax ebreus (strain TPSY) (Diaphorobacter sp. (strain TPSY)).